Here is a 673-residue protein sequence, read N- to C-terminus: Polygalacturonate 4-alpha-galacturonosyltransferase (673 aa).

Residues 1-22 are Cytoplasmic-facing; the sequence is MALKRGLSGVNRIRGSGGGSRS. Residues 23 to 43 form a helical; Signal-anchor for type II membrane protein membrane-spanning segment; that stretch reads VLVLLIFFCVFAPLCFFVGRG. Topologically, residues 44–673 are lumenal; the sequence is VYIDSSNDYS…PYLRRCNLHE (630 aa). Asn-103 carries N-linked (GlcNAc...) asparagine glycosylation. Positions 112 to 136 are disordered; that stretch reads GVDPSFRHSENPATPDVKSNNLNEK. Residues Asn-382, Asn-434, Asn-538, and Asn-585 are each glycosylated (N-linked (GlcNAc...) asparagine).

The protein belongs to the glycosyltransferase 8 family. As to expression, expressed in seedlings, inflorescences, flowers, siliques, pollen, roots, stems and leaves.

It is found in the golgi apparatus membrane. The enzyme catalyses [(1-&gt;4)-alpha-D-galacturonosyl](n) + UDP-alpha-D-galacturonate = [(1-&gt;4)-alpha-D-galacturonosyl](n+1) + UDP + H(+). Its pathway is glycan metabolism; pectin biosynthesis. Functionally, involved in pectin biosynthesis. Catalyzes the transfer of galacturonic acid from uridine 5'-diphosphogalacturonic acid onto the pectic polysaccharide homogalacturonan. The polypeptide is Polygalacturonate 4-alpha-galacturonosyltransferase (GAUT1) (Arabidopsis thaliana (Mouse-ear cress)).